We begin with the raw amino-acid sequence, 490 residues long: NAD/NADP-dependent betaine aldehyde dehydrogenase (490 aa).

Residues Thr26, Ile27, and Asp93 each contribute to the K(+) site. 150–153 (GAWN) is a binding site for NADPH. The active-site Charge relay system is Lys162. NADPH is bound at residue 176–179 (KPSE). Val180 provides a ligand contact to K(+). Residues Gly209 and 230–233 (GTST) contribute to the NADPH site. Leu246 is a K(+) binding site. Glu252 (proton acceptor) is an active-site residue. NADPH contacts are provided by Cys286 and Glu387. Cys286 functions as the Nucleophile in the catalytic mechanism. A Cysteine sulfenic acid (-SOH) modification is found at Cys286. 2 residues coordinate K(+): Lys457 and Gly460. Glu464 serves as the catalytic Charge relay system.

Belongs to the aldehyde dehydrogenase family. Dimer of dimers. K(+) serves as cofactor.

The catalysed reaction is betaine aldehyde + NAD(+) + H2O = glycine betaine + NADH + 2 H(+). The enzyme catalyses betaine aldehyde + NADP(+) + H2O = glycine betaine + NADPH + 2 H(+). It participates in amine and polyamine biosynthesis; betaine biosynthesis via choline pathway; betaine from betaine aldehyde: step 1/1. In terms of biological role, involved in the biosynthesis of the osmoprotectant glycine betaine. Catalyzes the irreversible oxidation of betaine aldehyde to the corresponding acid. In P.aeruginosa this reaction is a compulsory step in the assimilation of carbon and nitrogen when bacteria are growing in choline or choline precursors. Can use NADP(+) with similar efficiency to NAD(+), a property that can be used by the bacterium to produce the NADPH needed to combat the oxidative stress imposed by the host defenses. In Pseudomonas aeruginosa (strain ATCC 15692 / DSM 22644 / CIP 104116 / JCM 14847 / LMG 12228 / 1C / PRS 101 / PAO1), this protein is NAD/NADP-dependent betaine aldehyde dehydrogenase.